Here is a 146-residue protein sequence, read N- to C-terminus: Hemoglobin subunit beta (146 aa).

N-acetylvaline is present on valine 1. Positions 2-146 (HLTGEEKSLV…VANALAHKYH (145 aa)) constitute a Globin domain. At threonine 12 the chain carries Phosphothreonine. Serine 44 bears the Phosphoserine mark. Lysine 59 carries the N6-acetyllysine modification. Residue histidine 63 participates in heme b binding. Residue lysine 82 is modified to N6-acetyllysine. Heme b is bound at residue histidine 92. At cysteine 93 the chain carries S-nitrosocysteine. Lysine 144 carries the post-translational modification N6-acetyllysine.

The protein belongs to the globin family. As to quaternary structure, heterotetramer of two alpha chains and two beta chains. As to expression, red blood cells.

Its function is as follows. Involved in oxygen transport from the lung to the various peripheral tissues. The sequence is that of Hemoglobin subunit beta (HBB) from Ursus maritimus (Polar bear).